Here is a 265-residue protein sequence, read N- to C-terminus: Tryptophan synthase alpha chain (265 aa).

Catalysis depends on proton acceptor residues E45 and D56.

Belongs to the TrpA family. In terms of assembly, tetramer of two alpha and two beta chains.

It carries out the reaction (1S,2R)-1-C-(indol-3-yl)glycerol 3-phosphate + L-serine = D-glyceraldehyde 3-phosphate + L-tryptophan + H2O. It functions in the pathway amino-acid biosynthesis; L-tryptophan biosynthesis; L-tryptophan from chorismate: step 5/5. In terms of biological role, the alpha subunit is responsible for the aldol cleavage of indoleglycerol phosphate to indole and glyceraldehyde 3-phosphate. This Halalkalibacterium halodurans (strain ATCC BAA-125 / DSM 18197 / FERM 7344 / JCM 9153 / C-125) (Bacillus halodurans) protein is Tryptophan synthase alpha chain.